The primary structure comprises 98 residues: Co-chaperonin GroES (98 aa).

Belongs to the GroES chaperonin family. Heptamer of 7 subunits arranged in a ring. Interacts with the chaperonin GroEL.

Its subcellular location is the cytoplasm. Functionally, together with the chaperonin GroEL, plays an essential role in assisting protein folding. The GroEL-GroES system forms a nano-cage that allows encapsulation of the non-native substrate proteins and provides a physical environment optimized to promote and accelerate protein folding. GroES binds to the apical surface of the GroEL ring, thereby capping the opening of the GroEL channel. The polypeptide is Co-chaperonin GroES (Renibacterium salmoninarum (strain ATCC 33209 / DSM 20767 / JCM 11484 / NBRC 15589 / NCIMB 2235)).